A 62-amino-acid chain; its full sequence is Inner membrane protein p12 (62 aa).

The helical transmembrane segment at 16 to 36 (LLIVAIIVVIMAIMLYYFWWM) threads the bilayer.

It belongs to the asfivirus inner membrane protein p12 family. In terms of assembly, homomultimer; disulfide-linked. Post-translationally, not glycosylated.

It is found in the virion membrane. The protein is Inner membrane protein p12 of African swine fever virus (isolate Tick/Malawi/Lil 20-1/1983) (ASFV).